Consider the following 378-residue polypeptide: MNKGIVLLAAGGTGGHVFPAEALAHTLKARGYQVHLVTDSRAERYAGKFPADEIHVVPSATIGSKNPISVVRSLWKLWVGLRTARRLVTKLKPVAVVGFGGYPTVPPLLASTGLGVPSIIHEQNAVMGRANKALAARVKAIAGGFLPPANGQYSEKTVATGNPVRPAVLAASEIPYTPSQTGETFQLVVFGGSQGAQFFSSAVPAAICLMKDEQRKRIVVTQQARPEDKDSVIASYQKLGVKADVSPFFGDMASRIGEADLVISRSGASTVSELSVIGRPSILVPYPHALDHDQAANAAALSAAGGASVIKQAELSPQKLSSLLSSALAEPDRLSATAAAAKATGKPHAADVLADLVEAIAEGRSVQEFKKKNEGVGA.

Residues 13–15 (TGG), asparagine 124, arginine 165, serine 193, and glutamine 294 contribute to the UDP-N-acetyl-alpha-D-glucosamine site.

The protein belongs to the glycosyltransferase 28 family. MurG subfamily.

The protein resides in the cell inner membrane. The catalysed reaction is di-trans,octa-cis-undecaprenyl diphospho-N-acetyl-alpha-D-muramoyl-L-alanyl-D-glutamyl-meso-2,6-diaminopimeloyl-D-alanyl-D-alanine + UDP-N-acetyl-alpha-D-glucosamine = di-trans,octa-cis-undecaprenyl diphospho-[N-acetyl-alpha-D-glucosaminyl-(1-&gt;4)]-N-acetyl-alpha-D-muramoyl-L-alanyl-D-glutamyl-meso-2,6-diaminopimeloyl-D-alanyl-D-alanine + UDP + H(+). It functions in the pathway cell wall biogenesis; peptidoglycan biosynthesis. Its function is as follows. Cell wall formation. Catalyzes the transfer of a GlcNAc subunit on undecaprenyl-pyrophosphoryl-MurNAc-pentapeptide (lipid intermediate I) to form undecaprenyl-pyrophosphoryl-MurNAc-(pentapeptide)GlcNAc (lipid intermediate II). In Agrobacterium fabrum (strain C58 / ATCC 33970) (Agrobacterium tumefaciens (strain C58)), this protein is UDP-N-acetylglucosamine--N-acetylmuramyl-(pentapeptide) pyrophosphoryl-undecaprenol N-acetylglucosamine transferase.